We begin with the raw amino-acid sequence, 102 residues long: Citrate lyase acyl carrier protein (102 aa).

S14 is subject to O-(phosphoribosyl dephospho-coenzyme A)serine.

It belongs to the CitD family. As to quaternary structure, oligomer with a subunit composition of (alpha,beta,gamma)6.

The protein resides in the cytoplasm. Functionally, covalent carrier of the coenzyme of citrate lyase. This chain is Citrate lyase acyl carrier protein, found in Streptococcus equi subsp. equi (strain 4047).